Reading from the N-terminus, the 142-residue chain is Small ribosomal subunit protein bS18m (142 aa).

The protein belongs to the bacterial ribosomal protein bS18 family. Component of the mitochondrial small ribosomal subunit (mt-SSU). Mature mammalian 55S mitochondrial ribosomes consist of a small (28S) and a large (39S) subunit. The 28S small subunit contains a 12S ribosomal RNA (12S mt-rRNA) and 30 different proteins. The 39S large subunit contains a 16S rRNA (16S mt-rRNA), a copy of mitochondrial valine transfer RNA (mt-tRNA(Val)), which plays an integral structural role, and 52 different proteins. bS18m has a zinc binding site.

The protein resides in the mitochondrion. This Homo sapiens (Human) protein is Small ribosomal subunit protein bS18m (MRPS18C).